A 493-amino-acid polypeptide reads, in one-letter code: Glycylpeptide N-tetradecanoyltransferase (493 aa).

The tract at residues 1 to 30 is disordered; that stretch reads MSDSKDSKGKAPQKPNDAEQTPGGKLTPQA. Residues 82–85, 216–218, and 224–228 each bind tetradecanoyl-CoA; these read FKFW, LCI, and SKRLA. The active-site Proton acceptor; via carboxylate is Leu-493.

Belongs to the NMT family. In terms of assembly, monomer.

Its subcellular location is the cytoplasm. It carries out the reaction N-terminal glycyl-[protein] + tetradecanoyl-CoA = N-tetradecanoylglycyl-[protein] + CoA + H(+). Functionally, adds a myristoyl group to the N-terminal glycine residue of certain cellular proteins. This chain is Glycylpeptide N-tetradecanoyltransferase (swoF), found in Emericella nidulans (strain FGSC A4 / ATCC 38163 / CBS 112.46 / NRRL 194 / M139) (Aspergillus nidulans).